A 637-amino-acid polypeptide reads, in one-letter code: Mitochondrial Rho GTPase 1 (637 aa).

At 1 to 613 the chain is on the cytoplasmic side; that stretch reads MSDGETLADV…LRRVFYLSDS (613 aa). Positions 7-184 constitute a Miro 1 domain; sequence LADVRIVLIG…FYYAQKAVIY (178 aa). Residues 28–35, 74–78, and 135–138 contribute to the GTP site; these read SLLEDEWV, ISEMR, and LPSG. EF-hand domains follow at residues 200-235 and 320-355; these read RAKKALIRVFKICDRDNDGYLSDTELNDFQKLCFGI and EGVQFVSALFEKYDEDKDGCLSPSELQNLFSVCSAP. Ca(2+) contacts are provided by Asp213, Asp215, Asp217, Tyr219, Glu224, Asp333, Asp335, Asp337, Cys339, and Glu344. A Miro 2 domain is found at 436-601; sequence RKVFQCLVVG…FEQLAMMAVY (166 aa). GTP contacts are provided by residues 445–452, 482–486, and 549–552; these read GAKDAGKT, KVKEE, and TKVE. Residues 614 to 634 traverse the membrane as a helical; Anchor for type IV membrane protein segment; it reads NLLSKITFGAAIVALAGFLVL. Topologically, residues 635–637 are mitochondrial intermembrane; it reads KNL.

The protein belongs to the mitochondrial Rho GTPase family.

Its subcellular location is the mitochondrion outer membrane. Its function is as follows. Mitochondrial GTPase involved in mitochondrial trafficking. Probably involved in control of anterograde transport of mitochondria and their subcellular distribution. The chain is Mitochondrial Rho GTPase 1 from Caenorhabditis briggsae.